Consider the following 303-residue polypeptide: Probable RuBisCO transcriptional regulator (303 aa).

One can recognise an HTH lysR-type domain in the interval 6-63 (FTLDQLRIFQAIVVEGSFQKAAQSLYISQPAVSLQIQNLEQQLNAPLFDRSHRKAKLT). The H-T-H motif DNA-binding region spans 23–42 (FQKAAQSLYISQPAVSLQIQ).

It belongs to the LysR transcriptional regulatory family.

Its subcellular location is the plastid. The protein resides in the chloroplast. Functionally, trans-acting transcriptional regulator of RuBisCO genes (rbcL and rbcS) expression. This Cyanidioschyzon merolae (strain NIES-3377 / 10D) (Unicellular red alga) protein is Probable RuBisCO transcriptional regulator (rbcR).